We begin with the raw amino-acid sequence, 462 residues long: uncharacterized protein (462 aa).

The segment at 1-108 (MEDSNTNKDI…NGQDDQDEMD (108 aa)) is disordered. Over residues 36 to 51 (TVERILERKQKERESK) the composition is skewed to basic and acidic residues. A compositionally biased stretch (low complexity) spans 64–95 (SSPSSLLSSPISSNDNNNNNNNNNNESFDINN). The stretch at 119 to 150 (LLKRKAALAAKKKESLAEQMKKYNQQYDSIIS) forms a coiled coil. A disordered region spans residues 188 to 208 (SKLQSLNNNTSPSTSSSNLID). Residues 190–208 (LQSLNNNTSPSTSSSNLID) show a composition bias toward low complexity.

This is an uncharacterized protein from Dictyostelium discoideum (Social amoeba).